The chain runs to 37 residues: Large ribosomal subunit protein bL36 (37 aa).

Belongs to the bacterial ribosomal protein bL36 family.

The protein is Large ribosomal subunit protein bL36 of Acidovorax ebreus (strain TPSY) (Diaphorobacter sp. (strain TPSY)).